Consider the following 164-residue polypeptide: Ubiquitin-fold modifier-conjugating enzyme 1 (164 aa).

The active-site Glycyl thioester intermediate is the cysteine 116.

This sequence belongs to the ubiquitin-conjugating enzyme family. UFC1 subfamily.

Its function is as follows. E2-like enzyme which forms an intermediate with UFM1 via a thioester linkage. The polypeptide is Ubiquitin-fold modifier-conjugating enzyme 1 (Drosophila persimilis (Fruit fly)).